Reading from the N-terminus, the 355-residue chain is Elongation factor Ts (355 aa).

The tract at residues 82–85 (TDFV) is involved in Mg(2+) ion dislocation from EF-Tu.

This sequence belongs to the EF-Ts family.

The protein localises to the cytoplasm. In terms of biological role, associates with the EF-Tu.GDP complex and induces the exchange of GDP to GTP. It remains bound to the aminoacyl-tRNA.EF-Tu.GTP complex up to the GTP hydrolysis stage on the ribosome. This chain is Elongation factor Ts (tsf), found in Helicobacter pylori (strain J99 / ATCC 700824) (Campylobacter pylori J99).